A 1120-amino-acid chain; its full sequence is MAEAPPVSGTFKFNTDAAEFIPQEKKNSGLNCGTQRRLDSNRIGRRNYSSPPPCHLSRQVPYDEISAVHQHSYHPSGSKPKSQQTSFQSSPCNKSPKSHGLQNQPWQKLRNEKHHIRVKKAQSLAEQTSDTAGLESSTRSESGTDLREHSPSESEKEVVGADPRGAKPKKATQFVYSYGRGPKVKGKLKCEWSNRTTPKPEDAGPESTKPVGVFHPDSSEASSRKGVLDGYGARRNEQRRYPQKRPPWEVEGARPRPGRNPPKQEGHRHTNAGHRNNMGPIPKDDLNERPAKSTCDSENLAVINKSSRRVDQEKCTVRRQDPQVVSPFSRGKQNHVLKNVETHTGSLIEQLTTEKYECMVCCELVRVTAPVWSCQSCYHVFHLNCIKKWARSPASQADGQSGWRCPACQNVSAHVPNTYTCFCGKVKNPEWSRNEIPHSCGEVCRKKQPGQDCPHSCNLLCHPGPCPPCPAFMTKTCECGRTRHTVRCGQAVSVHCSNPCENILNCGQHQCAELCHGGQCQPCQIILNQVCYCGSTSRDVLCGTDVGKSDGFGDFSCLKICGKDLKCGNHTCSQVCHPQPCQQCPRLPQLVRCCPCGQTPLSQLLELGSSSRKTCMDPVPSCGKVCGKPLPCGSLDFIHTCEKLCHEGDCGPCSRTSVISCRCSFRTKELPCTSLKSEDATFMCDKRCNKKRLCGRHKCNEICCVDKEHKCPLICGRKLRCGLHRCEEPCHRGNCQTCWQASFDELTCHCGASVIYPPVPCGTRPPECTQTCARVHECDHPVYHSCHSEEKCPPCTFLTQKWCMGKHEFRSNIPCHLVDISCGLPCSATLPCGMHKCQRLCHKGECLVDEPCKQPCTTPRADCGHPCMAPCHTSSPCPVTACKAKVELQCECGRRKEMVICSEASSTYQRIAAISMASKITDMQLGGSVEISKLITKKEVHQARLECDEECSALERKKRLAEAFHISEDSDPFNIRSSGSKFSDSLKEDARKDLKFVSDVEKEMETLVEAVNKGKNSKKSHSFPPMNRDHRRIIHDLAQVYGLESVSYDSEPKRNVVVTAIRGKSVCPPTTLTGVLEREMQARPPPPIPHHRHQSDKNPGSSNLQKITKEPIIDYFDVQD.

Residues 9-26 form an interaction with PABPC1 and PABC4 region; sequence GTFKFNTDAAEFIPQEKK. The disordered stretch occupies residues 22–295; sequence PQEKKNSGLN…LNERPAKSTC (274 aa). Ser-50, Ser-82, and Ser-95 each carry phosphoserine. The span at 73-106 shows a compositional bias: polar residues; the sequence is YHPSGSKPKSQQTSFQSSPCNKSPKSHGLQNQPW. Over residues 111 to 120 the composition is skewed to basic residues; that stretch reads NEKHHIRVKK. The segment covering 124-141 has biased composition (polar residues); sequence LAEQTSDTAGLESSTRSE. Residues Ser-129 and Ser-150 each carry the phosphoserine modification. 4 stretches are compositionally biased toward basic and acidic residues: residues 142–159, 188–202, 222–254, and 282–291; these read SGTD…KEVV, LKCE…KPED, SSRK…EGAR, and PKDDLNERPA. Ser-326 is modified (phosphoserine). The segment at 358 to 409 adopts an RING-type; atypical zinc-finger fold; it reads CMVCCELVRVTAPVWSCQSCYHVFHLNCIKKWARSPASQADGQSGWRCPACQ. 8 consecutive NF-X1-type zinc fingers follow at residues 453–471, 506–525, 567–586, 632–655, 694–713, 721–740, 832–854, and 863–884; these read CPHS…PCPA, CGQH…PCQI, CGNH…QCPR, CGSL…PCSR, CGRH…KCPL, CGLH…TCWQ, CGMH…PCKQ, and CGHP…ACKA. One can recognise an R3H domain in the interval 994-1062; that stretch reads LKFVSDVEKE…KRNVVVTAIR (69 aa). Positions 1081–1109 are disordered; it reads QARPPPPIPHHRHQSDKNPGSSNLQKITK. Residues 1097 to 1106 are compositionally biased toward polar residues; sequence KNPGSSNLQK.

It belongs to the NFX1 family. In terms of assembly, isoform 1 interacts with PABPC1 and PABPC4. As to quaternary structure, (Microbial infection) Isoform 1 and isoform 3 interact with human papillomavirus (HPV) type-16 E6 oncoprotein. Isoform 3 is polyubiquitinated in the presence of HPV16 E6 protein; which leads to proteasomal degradation. Isoform 1 is not polyubiquitinated.

The protein resides in the nucleus. Binds to the X-box motif of MHC class II genes and represses their expression. May play an important role in regulating the duration of an inflammatory response by limiting the period in which MHC class II molecules are induced by interferon-gamma. Isoform 3 binds to the X-box motif of TERT promoter and represses its expression. Together with PABPC1 or PABPC4, isoform 1 acts as a coactivator for TERT expression. Mediates E2-dependent ubiquitination. This Homo sapiens (Human) protein is Transcriptional repressor NF-X1 (NFX1).